The sequence spans 242 residues: Galectin-3 (242 aa).

A disordered region spans residues 1–35 (MADGFSLNDALSGSGHPPNQGWPGPWGNQPAGPGG). Alanine 2 is subject to N-acetylalanine. Serine 6 is modified (phosphoserine; by CK1). Serine 12 is modified (phosphoserine). The span at 17–31 (PPNQGWPGPWGNQPA) shows a compositional bias: low complexity. 4 tandem repeats follow at residues 35 to 43 (GYPGAAYPG), 44 to 52 (AYPGHAPGA), 53 to 61 (YPGQAPPGP), and 62 to 70 (YPGPGAHGA). A 7 X 9 AA tandem repeats of Y-P-G-X(3)-P-[GS]-A region spans residues 35-98 (GYPGAAYPGA…GAGAYPGASP (64 aa)). The interval 55-93 (GQAPPGPYPGPGAHGAYPGQPGGPGAYPSPGQPSGAGAY) is disordered. Residues 71–80 (YPGQPGGPGA) form a 5; approximate repeat. Residues 80–93 (AYPSPGQPSGAGAY) are compositionally biased toward low complexity. A 6; approximate repeat occupies 81-92 (YPSPGQPSGAGA). Residues 93–98 (YPGASP) form a 7; truncated repeat. The Galectin domain occupies 110-240 (YDLPLPGGVM…DIQLTSASHA (131 aa)). Position 173–181 (173–181 (WGREERQTT)) interacts with a beta-D-galactoside. The Nuclear export signal motif lies at 218-233 (RNLKEINKLGISGDIQ).

Probably forms homo- or heterodimers. Interacts with DMBT1. Interacts with CD6 and ALCAM. Forms a complex with the ITGA3, ITGB1 and CSPG4. Interacts with LGALS3BP, LYPD3, ZFTRAF1 and UACA. Interacts with TRIM16; this interaction mediates autophagy of damage endomembranes. Interacts with cargo receptor TMED10; the interaction mediates the translocation from the cytoplasm into the ERGIC (endoplasmic reticulum-Golgi intermediate compartment) and thereby secretion. Interacts with and inhibits by binding NCR3/NKp30.

It localises to the cytoplasm. It is found in the nucleus. Its subcellular location is the secreted. Galactose-specific lectin which binds IgE. May mediate with the alpha-3, beta-1 integrin the stimulation by CSPG4 of endothelial cells migration. Together with DMBT1, required for terminal differentiation of columnar epithelial cells during early embryogenesis. In the nucleus: acts as a pre-mRNA splicing factor. Involved in acute inflammatory responses including neutrophil activation and adhesion, chemoattraction of monocytes macrophages, opsonization of apoptotic neutrophils, and activation of mast cells. Together with TRIM16, coordinates the recognition of membrane damage with mobilization of the core autophagy regulators ATG16L1 and BECN1 in response to damaged endomembranes. When secreted, interacts with NK cell-activating receptor NCR3/NKp30 acting as an inhibitory ligand which antagonizes NK cell attack. This Oryctolagus cuniculus (Rabbit) protein is Galectin-3 (LGALS3).